The chain runs to 99 residues: Aspartyl/glutamyl-tRNA(Asn/Gln) amidotransferase subunit C (99 aa).

It belongs to the GatC family. As to quaternary structure, heterotrimer of A, B and C subunits.

It catalyses the reaction L-glutamyl-tRNA(Gln) + L-glutamine + ATP + H2O = L-glutaminyl-tRNA(Gln) + L-glutamate + ADP + phosphate + H(+). The enzyme catalyses L-aspartyl-tRNA(Asn) + L-glutamine + ATP + H2O = L-asparaginyl-tRNA(Asn) + L-glutamate + ADP + phosphate + 2 H(+). Its function is as follows. Allows the formation of correctly charged Asn-tRNA(Asn) or Gln-tRNA(Gln) through the transamidation of misacylated Asp-tRNA(Asn) or Glu-tRNA(Gln) in organisms which lack either or both of asparaginyl-tRNA or glutaminyl-tRNA synthetases. The reaction takes place in the presence of glutamine and ATP through an activated phospho-Asp-tRNA(Asn) or phospho-Glu-tRNA(Gln). The protein is Aspartyl/glutamyl-tRNA(Asn/Gln) amidotransferase subunit C of Thermobifida fusca (strain YX).